The following is a 943-amino-acid chain: Zinc finger BED domain-containing protein 39 (943 aa).

Residues 1 to 99 (MSSVSSDIDG…DIAMDVSGST (99 aa)) form a disordered region. A compositionally biased stretch (basic and acidic residues) spans 12 to 21 (PETKRFRIDV). Over residues 50-72 (SPAAPSSASYRSSNSSVISSSES) the composition is skewed to low complexity. Residues 73–85 (PIKDEDVDVHDGQ) are compositionally biased toward basic and acidic residues. The BED-type; degenerate zinc finger occupies 184–235 (NKQTPVWKYFVYNKTENLSRCIVGDCTYMLKGPHTSTLACHLKKHTREYSEF). Disordered regions lie at residues 242–315 (YSRT…KEPS) and 328–348 (RQATNNSNGSPPTTPHAPQLP). A compositionally biased stretch (polar residues) spans 262-276 (TLQTQNTPRQTGSPA). The segment covering 277 to 292 (STCNTNSNTSSSVSSG) has biased composition (low complexity). The span at 328 to 338 (RQATNNSNGSP) shows a compositional bias: polar residues.

As to expression, expressed in distal tip cells and in germline cells.

The protein localises to the nucleus. Its subcellular location is the cytoplasm. In terms of biological role, regulates the timing and orientation of distal tip cell migration during gonadal development. May act in parallel to cacn-1 and Rac GTPases to control the anterior and posterior migration of distal tip cells. This Caenorhabditis elegans protein is Zinc finger BED domain-containing protein 39.